The primary structure comprises 304 residues: Choline-phosphate cytidylyltransferase 2 (304 aa).

CTP-binding positions include 28–36 and Lys66; that span reads IFDLFHFGH. Residues Lys66 and Trp95 each contribute to the substrate site. Residues 112–113, Tyr117, and 142–146 contribute to the CTP site; these read HD and RTEGI. The tract at residues 266–292 is disordered; that stretch reads QNGLTISKDNDDEQMSDDNEFAEEDCV. Residues 275 to 291 are compositionally biased toward acidic residues; the sequence is NDDEQMSDDNEFAEEDC.

It belongs to the cytidylyltransferase family.

It carries out the reaction phosphocholine + CTP + H(+) = CDP-choline + diphosphate. It functions in the pathway phospholipid metabolism; phosphatidylcholine biosynthesis; phosphatidylcholine from phosphocholine: step 1/2. Functionally, plays an important role in the biosynthesis of the phospholipid phosphatidylcholine. Catalyzes the formation of CDP-choline. This is Choline-phosphate cytidylyltransferase 2 from Arabidopsis thaliana (Mouse-ear cress).